Consider the following 134-residue polypeptide: Transcription antitermination protein NusB (134 aa).

This sequence belongs to the NusB family.

In terms of biological role, involved in transcription antitermination. Required for transcription of ribosomal RNA (rRNA) genes. Binds specifically to the boxA antiterminator sequence of the ribosomal RNA (rrn) operons. This Shewanella woodyi (strain ATCC 51908 / MS32) protein is Transcription antitermination protein NusB.